We begin with the raw amino-acid sequence, 196 residues long: Ribosome maturation factor RimP (196 aa).

Belongs to the RimP family.

It is found in the cytoplasm. Required for maturation of 30S ribosomal subunits. This Lawsonia intracellularis (strain PHE/MN1-00) protein is Ribosome maturation factor RimP.